The following is a 171-amino-acid chain: Secretion monitor (171 aa).

A signal peptide spans 1–30; that stretch reads MIGILNRWRQFGRRYFWPHLLLGMVAASLG.

This sequence belongs to the SecM family.

Its subcellular location is the cytoplasm. The protein localises to the cytosol. It is found in the periplasm. Regulates secA expression by translational coupling of the secM secA operon. Translational pausing at a specific Pro residue 5 residues before the end of the protein may allow disruption of a mRNA repressor helix that normally suppresses secA translation initiation. This is Secretion monitor from Pectobacterium atrosepticum (strain SCRI 1043 / ATCC BAA-672) (Erwinia carotovora subsp. atroseptica).